A 679-amino-acid chain; its full sequence is Transketolase 10 (679 aa).

A substrate-binding site is contributed by His-40. Thiamine diphosphate contacts are provided by residues His-80 and 129–131 (GPL). Position 170 (Asp-170) interacts with Mg(2+). Residues Gly-171 and Asn-200 each coordinate thiamine diphosphate. Residues Asn-200 and Ile-202 each contribute to the Mg(2+) site. Residues His-277, Arg-371, and Ser-398 each coordinate substrate. His-277 contacts thiamine diphosphate. The thiamine diphosphate site is built by Glu-425 and Phe-452. Glu-425 (proton donor) is an active-site residue. Substrate is bound by residues His-476, Asp-484, and Arg-535.

The protein belongs to the transketolase family. As to quaternary structure, homodimer. The cofactor is Mg(2+). It depends on Ca(2+) as a cofactor. Mn(2+) is required as a cofactor. Co(2+) serves as cofactor. Requires thiamine diphosphate as cofactor. As to expression, leaves.

The catalysed reaction is D-sedoheptulose 7-phosphate + D-glyceraldehyde 3-phosphate = aldehydo-D-ribose 5-phosphate + D-xylulose 5-phosphate. Its function is as follows. Could be involved in the conversion of sugars, which are a major phenomenon in the rehydration process. In terms of biological role, catalyzes the transfer of a two-carbon ketol group from a ketose donor to an aldose acceptor, via a covalent intermediate with the cofactor thiamine pyrophosphate. The protein is Transketolase 10 (TKT10) of Craterostigma plantagineum (Blue gem).